Consider the following 257-residue polypeptide: MEFRGHDEPVDEMGVAYGRTPPSSSSSPAASASAGNGAGAAEVRYHECLRNHAAAMGGHVVDGCGEFMPMPGDAADALKCAACGCHRSFHRKDDGQQQQQLRLLIPSPPTPRVPLLMPPPQPQPHPHPHPQHPYLHPPFPYHHTPSGSGGTTTESSSEERGPPSSSAAAAQGRRKRFRTKFTPEQKEQMLAFAERVGWRMQKQDEALVEQFCAQVGVRRQVFKVWMHNNKSSIGSSSGGGSRRQPQEQQSQQQQQQQ.

Positions 1-35 (MEFRGHDEPVDEMGVAYGRTPPSSSSSPAASASAG) are disordered. The span at 21–35 (PPSSSSSPAASASAG) shows a compositional bias: low complexity. Residues 45-93 (YHECLRNHAAAMGGHVVDGCGEFMPMPGDAADALKCAACGCHRSFHRKD) form a ZF-HD dimerization-type; degenerate zinc finger. Pro residues predominate over residues 106–125 (PSPPTPRVPLLMPPPQPQPH). 2 disordered regions span residues 106–182 (PSPP…TKFT) and 228–257 (NNKSSIGSSSGGGSRRQPQEQQSQQQQQQQ). Residues 141–155 (YHHTPSGSGGTTTES) are compositionally biased toward low complexity. The homeobox DNA-binding region spans 174–237 (RKRFRTKFTP…NNKSSIGSSS (64 aa)). Positions 242 to 257 (RRQPQEQQSQQQQQQQ) are enriched in low complexity.

Homo- and heterodimer with other ZFHD proteins.

The protein localises to the nucleus. Functionally, putative transcription factor. The chain is Zinc-finger homeodomain protein 6 (ZHD6) from Oryza sativa subsp. indica (Rice).